Reading from the N-terminus, the 28-residue chain is Potassium channel toxin alpha-KTx 9.10 (28 aa).

Cystine bridges form between Cys3–Cys19, Cys6–Cys24, and Cys10–Cys26.

It belongs to the short scorpion toxin superfamily. Potassium channel inhibitor family. Alpha-KTx 09 subfamily. As to expression, expressed by the venom gland.

It localises to the secreted. Functionally, blocks Shaker potassium channels. The chain is Potassium channel toxin alpha-KTx 9.10 from Mesobuthus eupeus (Lesser Asian scorpion).